The chain runs to 388 residues: MASEMSKNVKVTDDQEVTSQERDQSGGTKVGGEEEIAPLARQSSILSLTLEELQNSLCEPGRNFGSMNMDEFVANIWNAEEFQATTGGCKGAMEEAKVVDSGSGSGDAGGSGLCRQGSFSLPLPLCQKTVEEVWTEINQAPAHTSAPASALQPHAGSGGVAANDRQVTLGEMTLEDFLVKAGVVRGSFTGQAAMGSGMVNGPVNPMQQGQGGPMMFPVGPVNAMYPVMGDGMGYPGGYNGMAIVPPPPPAQGAMVVVSPGSSDGMSAMTHADMMNCIGNGMMIENGTRKRPHREDGCAEKTVERRQRRMIKNRESAARSRARKQAYTVELEAELNYLKQENARLKEAEKTVLLTKKQMLVEKMMEQSKEKMNANRGGSQLRRSGSCMW.

The disordered stretch occupies residues 1 to 36 (MASEMSKNVKVTDDQEVTSQERDQSGGTKVGGEEEI). At S44 the chain carries Phosphoserine. The 64-residue stretch at 302–365 (VERRQRRMIK…KQMLVEKMME (64 aa)) folds into the bZIP domain. The basic motif stretch occupies residues 304-323 (RRQRRMIKNRESAARSRARK). A leucine-zipper region spans residues 330-344 (LEAELNYLKQENARL). Residues 368–388 (KEKMNANRGGSQLRRSGSCMW) form a disordered region.

It belongs to the bZIP family. ABI5 subfamily. In terms of assembly, forms homodimers. Interacts with VP1. Interacts with GF14D. Interacts with PP2C51. Interacts with SAPK2. Phosphorylated at Ser-44 by SAPK6. In terms of tissue distribution, expressed in roots, leaves and panicles. Expressed in seeds.

It localises to the nucleus. Functionally, transcription factor that possesses transactivation activity in yeast. Involved in abscisic acid (ABA) signaling pathway. Binds to the G-box motif 5'-CACGTG-3' of TRAB1 gene promoter. Involved in the regulation of pollen maturation. May act as negative regulator of salt stress response. Together with PYL5, PP2C30 and SAPK2, is part of an ABA signaling unit that modulates seed germination and early seedling growth. The polypeptide is bZIP transcription factor ABI5 homolog (Oryza sativa subsp. japonica (Rice)).